The chain runs to 90 residues: Molybdopterin synthase sulfur carrier subunit (90 aa).

G90 is subject to 1-thioglycine; alternate. The residue at position 90 (G90) is a Glycyl adenylate; alternate.

It belongs to the MoaD family. MOCS2A subfamily. Heterotetramer; composed of 2 small (Mocs2A) and 2 large (Mocs2B) subunits. C-terminal thiocarboxylation occurs in 2 steps, it is first acyl-adenylated (-COAMP) via the hesA/moeB/thiF part of MOCS3, then thiocarboxylated (-COSH) via the rhodanese domain of MOCS3.

It localises to the cytoplasm. Its pathway is cofactor biosynthesis; molybdopterin biosynthesis. In terms of biological role, acts as a sulfur carrier required for molybdopterin biosynthesis. Component of the molybdopterin synthase complex that catalyzes the conversion of precursor Z into molybdopterin by mediating the incorporation of 2 sulfur atoms into precursor Z to generate a dithiolene group. In the complex, serves as sulfur donor by being thiocarboxylated (-COSH) at its C-terminus by MOCS3. After interaction with Mocs2B, the sulfur is then transferred to precursor Z to form molybdopterin. The chain is Molybdopterin synthase sulfur carrier subunit from Drosophila sechellia (Fruit fly).